The chain runs to 79 residues: Cell division protein ZapB (79 aa).

Positions 6–78 (FEKLEVKVQQ…LRALLGKMEE (73 aa)) form a coiled coil.

It belongs to the ZapB family. In terms of assembly, homodimer. The ends of the coiled-coil dimer bind to each other, forming polymers. Interacts with FtsZ.

It is found in the cytoplasm. In terms of biological role, non-essential, abundant cell division factor that is required for proper Z-ring formation. It is recruited early to the divisome by direct interaction with FtsZ, stimulating Z-ring assembly and thereby promoting cell division earlier in the cell cycle. Its recruitment to the Z-ring requires functional FtsA or ZipA. The polypeptide is Cell division protein ZapB (Yersinia enterocolitica serotype O:8 / biotype 1B (strain NCTC 13174 / 8081)).